Reading from the N-terminus, the 43-residue chain is Protein PsbN (43 aa).

The helical transmembrane segment at 7-27 threads the bilayer; sequence LSIAIGSILLVITGFAIYTAF.

It belongs to the PsbN family.

It localises to the cellular thylakoid membrane. Its function is as follows. May play a role in photosystem I and II biogenesis. This chain is Protein PsbN, found in Crocosphaera subtropica (strain ATCC 51142 / BH68) (Cyanothece sp. (strain ATCC 51142)).